The sequence spans 248 residues: PF03932 family protein CutC (248 aa).

The protein belongs to the CutC family. In terms of assembly, homodimer.

It is found in the cytoplasm. The protein is PF03932 family protein CutC of Shigella dysenteriae serotype 1 (strain Sd197).